The chain runs to 143 residues: Hemoglobin cathodic subunit alpha (143 aa).

S1 carries the N-acetylserine modification. Residues 1–143 (SLAPGDKTVV…VCAALSDKYR (143 aa)) form the Globin domain. H59 provides a ligand contact to O2. H89 provides a ligand contact to heme b.

It belongs to the globin family. Heterotetramer of two alpha chains and two beta chains. As to expression, red blood cells.

Functionally, involved in oxygen transport from gills to the various peripheral tissues. The protein is Hemoglobin cathodic subunit alpha of Gymnothorax unicolor (Brown moray).